The following is a 332-amino-acid chain: L-lactate dehydrogenase A chain (332 aa).

A2 bears the N-acetylalanine mark. At K5 the chain carries N6-acetyllysine; alternate. K5 carries the post-translational modification N6-succinyllysine; alternate. K14 is subject to N6-acetyllysine. Position 18 is a phosphothreonine (T18). 29 to 57 (GAVGMACAISILMKDLADELALVDVIEDK) lines the NAD(+) pocket. K57 carries the post-translational modification N6-acetyllysine; alternate. A Glycyl lysine isopeptide (Lys-Gly) (interchain with G-Cter in SUMO2); alternate cross-link involves residue K57. An N6-acetyllysine modification is found at K81. R99 is an NAD(+) binding site. R106 contacts substrate. K118 is subject to N6-acetyllysine; alternate. N6-succinyllysine; alternate is present on K118. K126 carries the post-translational modification N6-acetyllysine. The substrate site is built by N138 and R169. The active-site Proton acceptor is H193. K224 and K232 each carry N6-acetyllysine. Y239 is modified (phosphotyrosine). K243 carries the post-translational modification N6-acetyllysine. T248 serves as a coordination point for substrate. The residue at position 309 (T309) is a Phosphothreonine. The residue at position 310 (S310) is a Phosphoserine. K318 carries the post-translational modification N6-acetyllysine; alternate. K318 bears the N6-succinyllysine; alternate mark. T322 is modified (phosphothreonine).

The protein belongs to the LDH/MDH superfamily. LDH family. Homotetramer. Interacts with PTEN upstream reading frame protein MP31. In terms of processing, ISGylated.

It is found in the cytoplasm. It catalyses the reaction (S)-lactate + NAD(+) = pyruvate + NADH + H(+). It functions in the pathway fermentation; pyruvate fermentation to lactate; (S)-lactate from pyruvate: step 1/1. Interconverts simultaneously and stereospecifically pyruvate and lactate with concomitant interconversion of NADH and NAD(+). The chain is L-lactate dehydrogenase A chain (LDHA) from Pongo abelii (Sumatran orangutan).